Here is a 194-residue protein sequence, read N- to C-terminus: dTTP/UTP pyrophosphatase (194 aa).

Asp69 functions as the Proton acceptor in the catalytic mechanism.

It belongs to the Maf family. YhdE subfamily. It depends on a divalent metal cation as a cofactor.

It localises to the cytoplasm. The catalysed reaction is dTTP + H2O = dTMP + diphosphate + H(+). The enzyme catalyses UTP + H2O = UMP + diphosphate + H(+). Its function is as follows. Nucleoside triphosphate pyrophosphatase that hydrolyzes dTTP and UTP. May have a dual role in cell division arrest and in preventing the incorporation of modified nucleotides into cellular nucleic acids. The polypeptide is dTTP/UTP pyrophosphatase (Symbiobacterium thermophilum (strain DSM 24528 / JCM 14929 / IAM 14863 / T)).